Here is a 174-residue protein sequence, read N- to C-terminus: MLPRVALTTMSWMLLSSLMLLSQVQGEDAKEDVPTSRISCPKGSRAYGSYCYALFSVSKSWFDADLACQKRPSGHLVSVLSGSEASFVSSLIKSSGNSGQNVWIGLHDPTLGQEPNRGGWEWSNADVMNYFNWETNPSSVSGSHCGTLTRASGFLRWRENNCISELPYVCKFKA.

The signal sequence occupies residues 1 to 26 (MLPRVALTTMSWMLLSSLMLLSQVQG). The propeptide occupies 27-37 (EDAKEDVPTSR). 3 disulfides stabilise this stretch: C40/C51, C68/C170, and C145/C162. Residues 47–171 (YGSYCYALFS…CISELPYVCK (125 aa)) enclose the C-type lectin domain. The interval 103-118 (WIGLHDPTLGQEPNRG) is sufficient to activate EXTL3. Zn(2+) is bound at residue H107. The EPN motif lies at 114-116 (EPN). 2 residues coordinate Zn(2+): E121 and H144.

Forms a hexameric membrane-permeabilizing oligomeric pore on membrane phospholipids. The hexamer is formed by three dimers related by helical symmetry. Forms filaments, filamentation traps pore complexes and limits damage to host cells. Interacts with EXTL3. Proteolytic processing by trypsin removes an inhibitory N-terminal propeptide and is essential for peptidoglycan binding and antibacterial activity. Expressed in injured skeletal muscles and sciatic nerve (at protein level). Expressed in the pancreas. Expression increases during the acute phase of pancreatitis.

The protein localises to the secreted. The protein resides in the cytoplasm. Lipopolysaccharide inhibits pore-forming activity, explaining why is bactericidal for Gram-positive but not Gram-negative bacteria. Functionally, bactericidal C-type lectin which acts exclusively against Gram-positive bacteria and mediates bacterial killing by binding to surface-exposed carbohydrate moieties of peptidoglycan. Restricts bacterial colonization of the intestinal epithelial surface and consequently limits activation of adaptive immune responses by the microbiota. Acts as a hormone in response to different stimuli like anti-inflammatory signals, such as IL17A, or gut microbiome. Is secreted by different cell types to activate its receptor EXTL3 and induce cell specific signaling pathways. Induced by IL17A in keratinocytes, regulates keratinocyte proliferation and differentiation after skin injury. In parallel, inhibits skin inflammation through the inhibition of inflammatory cytokines such as IL6 and TNF. Induced by IL22 in lung epithelial cells, inhibits cytokine production and regulates allergic airway inflammation. Induced in small intestine by inulin-enriched diet and Lactobacillus gasseri enriched microbiome, plays a role in the improvement of gut barrier function, the regulation of energy balance and glucose levels. Modulates microbiota composition in duodenal contents. Produced by nociceptor in response to endotoxins, prevents endotoxic death by targeting kynurenine pathway in microglia. In terms of biological role, has bacteriostatic activity. Its function is as follows. Has bactericidal activity against L.monocytogenes and methicillin-resistant S.aureus. In Rattus norvegicus (Rat), this protein is Regenerating islet-derived protein 3-gamma.